The sequence spans 49 residues: Small, acid-soluble spore protein O (49 aa).

A disordered region spans residues 1 to 49 (MGKRKANHTISGMNAASAQGQGAGYNEEFANENLTPAERQNNKKRKKNQ). Over residues 8–20 (HTISGMNAASAQG) the composition is skewed to polar residues.

It belongs to the SspO family.

The protein localises to the spore core. The polypeptide is Small, acid-soluble spore protein O (Bacillus anthracis (strain A0248)).